Here is a 208-residue protein sequence, read N- to C-terminus: Ribosomal RNA large subunit methyltransferase E (208 aa).

S-adenosyl-L-methionine contacts are provided by glycine 63, tryptophan 65, aspartate 83, aspartate 99, and aspartate 124. The active-site Proton acceptor is the lysine 164.

Belongs to the class I-like SAM-binding methyltransferase superfamily. RNA methyltransferase RlmE family.

It localises to the cytoplasm. The enzyme catalyses uridine(2552) in 23S rRNA + S-adenosyl-L-methionine = 2'-O-methyluridine(2552) in 23S rRNA + S-adenosyl-L-homocysteine + H(+). Its function is as follows. Specifically methylates the uridine in position 2552 of 23S rRNA at the 2'-O position of the ribose in the fully assembled 50S ribosomal subunit. The polypeptide is Ribosomal RNA large subunit methyltransferase E (Blochmanniella pennsylvanica (strain BPEN)).